A 199-amino-acid chain; its full sequence is Ribonuclease HII (199 aa).

In terms of domain architecture, RNase H type-2 spans 7-196 (PWVCGVDEAG…VRELMANEKD (190 aa)). Residues D13, E14, and D105 each contribute to the a divalent metal cation site.

It belongs to the RNase HII family. Requires Mn(2+) as cofactor. It depends on Mg(2+) as a cofactor.

It localises to the cytoplasm. The enzyme catalyses Endonucleolytic cleavage to 5'-phosphomonoester.. Endonuclease that specifically degrades the RNA of RNA-DNA hybrids. The sequence is that of Ribonuclease HII from Nitrosospira multiformis (strain ATCC 25196 / NCIMB 11849 / C 71).